The primary structure comprises 521 residues: GMP synthase [glutamine-hydrolyzing] (521 aa).

Residues 5-197 (KILILDFGSQ…VLDICGAQPS (193 aa)) enclose the Glutamine amidotransferase type-1 domain. Cys81 serves as the catalytic Nucleophile. Residues His171 and Glu173 contribute to the active site. Residues 198 to 390 (WTMPNYIEEA…LGLPREMVYR (193 aa)) enclose the GMPS ATP-PPase domain. An ATP-binding site is contributed by 225–231 (SGGVDSS).

In terms of assembly, homodimer.

It carries out the reaction XMP + L-glutamine + ATP + H2O = GMP + L-glutamate + AMP + diphosphate + 2 H(+). It participates in purine metabolism; GMP biosynthesis; GMP from XMP (L-Gln route): step 1/1. Functionally, catalyzes the synthesis of GMP from XMP. In Neisseria meningitidis serogroup C / serotype 2a (strain ATCC 700532 / DSM 15464 / FAM18), this protein is GMP synthase [glutamine-hydrolyzing].